The following is a 525-amino-acid chain: uncharacterized protein (525 aa).

Helical transmembrane passes span 7-29, 34-51, 64-82, 92-114, 121-143, and 148-170; these read FLAT…LGQI, LRFG…VGAL, GLGV…GSTF, LMLA…GRLF, VAGL…ATHG, and LVGY…AIIA. RCK C-terminal domains are found at residues 178–257 and 259–341; these read KDNT…LGHV and ERTL…LFGD. 5 helical membrane-spanning segments follow: residues 351 to 370, 374 to 396, 416 to 438, 443 to 465, and 502 to 524; these read ALSL…LMVA, GLQF…GSIH, LGLM…SQAV, LAVI…AAAW, and SAYG…VIVL.

The protein belongs to the AAE transporter (TC 2.A.81) family.

The protein localises to the cell membrane. This is an uncharacterized protein from Cutibacterium acnes (strain DSM 16379 / KPA171202) (Propionibacterium acnes).